The primary structure comprises 670 residues: uncharacterized protein (670 aa).

10 helical membrane passes run 23 to 42, 47 to 69, 76 to 98, 118 to 140, 153 to 170, 381 to 403, 410 to 432, 437 to 454, 461 to 483, and 493 to 510; these read YALR…YYLN, YWAM…SKSL, LLGA…FFLL, VAYA…VNIT, VCEV…MMIL, QWDA…SAVA, SLLM…GLMV, LWQF…MQLL, FAAL…NPPV, and NLAK…FAIL.

This sequence belongs to the aromatic acid exporter ArAE (TC 2.A.85) family.

It is found in the cell membrane. This is an uncharacterized protein from Escherichia coli (strain K12).